The primary structure comprises 408 residues: S-adenosylmethionine sensor upstream of mTORC1 (408 aa).

The segment covering 1–16 (MEAAPRSRPRPGGAAA) has biased composition (low complexity). The interval 1–37 (MEAAPRSRPRPGGAAASPPPPPPPPPPEQERKLEQEK) is disordered. Residues 17–27 (SPPPPPPPPPP) show a composition bias toward pro residues. Residues 28-37 (EQERKLEQEK) are compositionally biased toward basic and acidic residues. S-adenosyl-L-methionine-binding residues include Arg97, Gly175, Asp193, Asp205, Phe206, and Ser247.

It belongs to the BMT2/SAMTOR family. As to quaternary structure, interacts with the GATOR1 complex; interaction is disrupted when SAMTOR binds S-adenosyl-L-methionine. Interacts with the KICSTOR complex; interaction is disrupted when SAMTOR binds S-adenosyl-L-methionine.

S-adenosyl-L-methionine-binding protein that acts as an inhibitor of mTORC1 signaling via interaction with the GATOR1 and KICSTOR complexes. Acts as a sensor of S-adenosyl-L-methionine to signal methionine sufficiency to mTORC1: in presence of methionine, binds S-adenosyl-L-methionine, leading to disrupt interaction with the GATOR1 and KICSTOR complexes and promote mTORC1 signaling. Upon methionine starvation, S-adenosyl-L-methionine levels are reduced, thereby promoting the association with GATOR1 and KICSTOR, leading to inhibit mTORC1 signaling. Probably also acts as a S-adenosyl-L-methionine-dependent methyltransferase. In Gallus gallus (Chicken), this protein is S-adenosylmethionine sensor upstream of mTORC1.